Here is a 207-residue protein sequence, read N- to C-terminus: MTDPQIHLDLMPHGIADEFIVGVDEVGRGPLVGDVVAAAVILPKGCELLLKDSKKLSESKRELIAHQIQQEAIDFCIATASPDEIDSLNILHATMLAMKRAVEGLNNPIKKVLVDGNRCPNVPYECEAIVKGDGKVPVISAASILAKVHRDQQMQVLHEAYPEYGFDAHKGYPTKLHLEKLSQHGLIPGYRRSFKPVKNILQLLEKI.

One can recognise an RNase H type-2 domain in the interval 18–206; sequence EFIVGVDEVG…VKNILQLLEK (189 aa). A divalent metal cation contacts are provided by D24, E25, and D115.

The protein belongs to the RNase HII family. Mn(2+) is required as a cofactor. The cofactor is Mg(2+).

The protein resides in the cytoplasm. The catalysed reaction is Endonucleolytic cleavage to 5'-phosphomonoester.. In terms of biological role, endonuclease that specifically degrades the RNA of RNA-DNA hybrids. The polypeptide is Ribonuclease HII (Hydrogenovibrio crunogenus (strain DSM 25203 / XCL-2) (Thiomicrospira crunogena)).